A 161-amino-acid polypeptide reads, in one-letter code: Transcriptional repressor NrdR (161 aa).

Positions 1 to 23 are disordered; it reads MRCPFCGHPDTQVKDSRPAEDGN. A zinc finger spans residues 3–34; the sequence is CPFCGHPDTQVKDSRPAEDGNAIRRRRQCPSC. Positions 11–23 are enriched in basic and acidic residues; sequence TQVKDSRPAEDGN. One can recognise an ATP-cone domain in the interval 49-139; the sequence is LTVMKKSGRR…VYKDFHKVED (91 aa).

The protein belongs to the NrdR family. Zn(2+) is required as a cofactor.

Negatively regulates transcription of bacterial ribonucleotide reductase nrd genes and operons by binding to NrdR-boxes. The polypeptide is Transcriptional repressor NrdR (Maricaulis maris (strain MCS10) (Caulobacter maris)).